The primary structure comprises 552 residues: ATP synthase subunit alpha (552 aa).

173–180 serves as a coordination point for ATP; it reads GDRQTGKT. The disordered stretch occupies residues 516 to 552; the sequence is DGKPLVNEPAPSPLDPGLVRQESIPVHRPAARKDDEG.

Belongs to the ATPase alpha/beta chains family. F-type ATPases have 2 components, CF(1) - the catalytic core - and CF(0) - the membrane proton channel. CF(1) has five subunits: alpha(3), beta(3), gamma(1), delta(1), epsilon(1). CF(0) has three main subunits: a(1), b(2) and c(9-12). The alpha and beta chains form an alternating ring which encloses part of the gamma chain. CF(1) is attached to CF(0) by a central stalk formed by the gamma and epsilon chains, while a peripheral stalk is formed by the delta and b chains.

Its subcellular location is the cell membrane. It carries out the reaction ATP + H2O + 4 H(+)(in) = ADP + phosphate + 5 H(+)(out). Produces ATP from ADP in the presence of a proton gradient across the membrane. The alpha chain is a regulatory subunit. The polypeptide is ATP synthase subunit alpha (Frankia casuarinae (strain DSM 45818 / CECT 9043 / HFP020203 / CcI3)).